Here is a 206-residue protein sequence, read N- to C-terminus: MTAHDQRLTGGPAIAHRIGPNAILQLIPVLEAAFGPGAADRALAAAGVPRPGPESGMLPETQVSTLHRWLRDTHPEEAPRLLREAGLATGDYILANRIPPLAQRLIRALPAFLGARVLATAIAKHSWTFAGSGKFRVVSGRPLSFEIARNPVVAGESSDTPLCHWHAAVFERLFSRLVWPHVAVRETACCAKGAPACRFELLPKGR.

It participates in porphyrin-containing compound metabolism; bacteriochlorophyll biosynthesis (light-independent). This is Bacteriochlorophyll synthase 23 kDa chain (bchJ) from Cereibacter sphaeroides (strain ATCC 17023 / DSM 158 / JCM 6121 / CCUG 31486 / LMG 2827 / NBRC 12203 / NCIMB 8253 / ATH 2.4.1.) (Rhodobacter sphaeroides).